The following is a 152-amino-acid chain: Superoxide dismutase [Cu-Zn] (152 aa).

3 residues coordinate Cu cation: H45, H47, and H62. Cysteines 56 and 145 form a disulfide. Zn(2+) contacts are provided by H62, H70, H79, and D82. H119 is a binding site for Cu cation.

It belongs to the Cu-Zn superoxide dismutase family. As to quaternary structure, homodimer. The cofactor is Cu cation. Zn(2+) is required as a cofactor.

It is found in the cytoplasm. It catalyses the reaction 2 superoxide + 2 H(+) = H2O2 + O2. Functionally, destroys radicals which are normally produced within the cells and which are toxic to biological systems. The sequence is that of Superoxide dismutase [Cu-Zn] (SODCC) from Capsicum annuum (Capsicum pepper).